Consider the following 258-residue polypeptide: 5'-nucleotidase SurE (258 aa).

D9, D10, S42, and N96 together coordinate a divalent metal cation.

This sequence belongs to the SurE nucleotidase family. Requires a divalent metal cation as cofactor.

It localises to the cytoplasm. It catalyses the reaction a ribonucleoside 5'-phosphate + H2O = a ribonucleoside + phosphate. Functionally, nucleotidase that shows phosphatase activity on nucleoside 5'-monophosphates. The polypeptide is 5'-nucleotidase SurE (Campylobacter jejuni subsp. jejuni serotype O:6 (strain 81116 / NCTC 11828)).